A 505-amino-acid chain; its full sequence is MAESAGASSFFPLVVLLLAGSGGSGPRGIQALLCACTSCLQTNYTCETDGACMVSIFNLDGMEHHVRTCIPKVELVPAGKPFYCLSSEDLRNTHCCYIDFCNKIDLRVPSGHLKEPEHPSMWGPVELVGIIAGPVFLLFLIIIIVFLVINYHQRVYHNRQRLDMEDPSCEMCLSKDKTLQDLVYDLSTSGSGSGLPLFVQRTVARTIVLQEIIGKGRFGEVWRGRWRGGDVAVKIFSSREERSWFREAEIYQTVMLRHENILGFIAADNKDNGTWTQLWLVSDYHEHGSLFDYLNRYTVTIEGMIKLALSAASGLAHLHMEIVGTQGKPGIAHRDLKSKNILVKKNGMCAIADLGLAVRHDAVTDTIDIAPNQRVGTKRYMAPEVLDETINMKHFDSFKCADIYALGLVYWEIARRCNSGGVHEEYQLPYYDLVPSDPSIEEMRKVVCDQKLRPNVPNWWQSYEALRVMGKMMRECWYANGAARLTALRIKKTLSQLSVQEDVKI.

Positions 1 to 23 are cleaved as a signal peptide; the sequence is MAESAGASSFFPLVVLLLAGSGG. Residues 24–126 lie on the Extracellular side of the membrane; it reads SGPRGIQALL…EHPSMWGPVE (103 aa). Asn-43 carries N-linked (GlcNAc...) asparagine glycosylation. A helical membrane pass occupies residues 127 to 149; the sequence is LVGIIAGPVFLLFLIIIIVFLVI. Residues 150–505 are Cytoplasmic-facing; the sequence is NYHQRVYHNR…QLSVQEDVKI (356 aa). In terms of domain architecture, GS spans 177 to 206; sequence KTLQDLVYDLSTSGSGSGLPLFVQRTVART. The 291-residue stretch at 207 to 497 folds into the Protein kinase domain; sequence IVLQEIIGKG…LRIKKTLSQL (291 aa). ATP-binding positions include 213 to 221 and Lys-234; that span reads IGKGRFGEV. Asp-335 functions as the Proton acceptor in the catalytic mechanism. The residue at position 380 (Tyr-380) is a Phosphotyrosine.

It belongs to the protein kinase superfamily. TKL Ser/Thr protein kinase family. TGFB receptor subfamily. As to quaternary structure, forms an activin receptor complex with activin receptor type-2 (ACVR2A or ACVR2B). Part of a complex consisting of MAGI2/ARIP1, ACVR2A, ACVR1B and SMAD3. Interacts with SMAD2 and SMAD3. Interacts with SMAD7. Interacts with FKBP1A. Interacts with IGSF1. Interacts with CRIPTO. Interacts with TDP2. Interacts with TSC22D1/TSC-22. Requires Mg(2+) as cofactor. It depends on Mn(2+) as a cofactor. In terms of processing, autophosphorylated. Phosphorylated by activin receptor type-2 (ACVR2A or ACVR2B) in response to activin-binding at serine and threonine residues in the GS domain. Phosphorylation of ACVR1B by activin receptor type-2 regulates association with SMAD7. Ubiquitinated. Level of ubiquitination is regulated by the SMAD7-SMURF1 complex. Post-translationally, ubiquitinated. As to expression, urogenital ridge, testis, ovary, brain and lungs.

It localises to the cell membrane. It carries out the reaction L-threonyl-[receptor-protein] + ATP = O-phospho-L-threonyl-[receptor-protein] + ADP + H(+). The enzyme catalyses L-seryl-[receptor-protein] + ATP = O-phospho-L-seryl-[receptor-protein] + ADP + H(+). Its activity is regulated as follows. Activin receptor type-2 (ACVR2A or ACVR2B) activates the type-1 receptor through phosphorylation of its regulatory GS domain. Transmembrane serine/threonine kinase activin type-1 receptor forming an activin receptor complex with activin receptor type-2 (ACVR2A or ACVR2B). Transduces the activin signal from the cell surface to the cytoplasm and is thus regulating a many physiological and pathological processes including neuronal differentiation and neuronal survival, hair follicle development and cycling, FSH production by the pituitary gland, wound healing, extracellular matrix production, immunosuppression and carcinogenesis. Activin is also thought to have a paracrine or autocrine role in follicular development in the ovary. Within the receptor complex, type-2 receptors (ACVR2A and/or ACVR2B) act as a primary activin receptors whereas the type-1 receptors like ACVR1B act as downstream transducers of activin signals. Activin binds to type-2 receptor at the plasma membrane and activates its serine-threonine kinase. The activated receptor type-2 then phosphorylates and activates the type-1 receptor such as ACVR1B. Once activated, the type-1 receptor binds and phosphorylates the SMAD proteins SMAD2 and SMAD3, on serine residues of the C-terminal tail. Soon after their association with the activin receptor and subsequent phosphorylation, SMAD2 and SMAD3 are released into the cytoplasm where they interact with the common partner SMAD4. This SMAD complex translocates into the nucleus where it mediates activin-induced transcription. Inhibitory SMAD7, which is recruited to ACVR1B through FKBP1A, can prevent the association of SMAD2 and SMAD3 with the activin receptor complex, thereby blocking the activin signal. Activin signal transduction is also antagonized by the binding to the receptor of inhibin-B via the IGSF1 inhibin coreceptor. ACVR1B also phosphorylates TDP2. This Rattus norvegicus (Rat) protein is Activin receptor type-1B (Acvr1b).